We begin with the raw amino-acid sequence, 370 residues long: Fe(2+) transport protein 2 (370 aa).

The N-terminal stretch at 1 to 25 is a signal peptide; sequence MMMSSSQTPVRIAFVFLVILAATDA. At 26-55 the chain is on the extracellular side; that stretch reads HSDHRTPPPACGGAAVGGECHSVARALRLK. A helical membrane pass occupies residues 56-76; that stretch reads LIAIPAILAASVAGVCLPLFA. Residues 77-85 are Cytoplasmic-facing; it reads RSVPALRPD. The chain crosses the membrane as a helical span at residues 86–106; that stretch reads GGLFAVVKAFASGVILGTGYM. The Extracellular portion of the chain corresponds to 107–130; sequence HVLPDSFNDLTSPCLPRKPWSEFP. The chain crosses the membrane as a helical span at residues 131–151; that stretch reads FAAFVAMLAAVFTLMVDSLML. Residues 152–215 are Cytoplasmic-facing; sequence TFHTRGSKGR…TTKAQLLRNR (64 aa). Residues 216–236 form a helical membrane-spanning segment; sequence VIVQVLEMGIVVHSVVIGLGM. Residues 237 to 247 are Extracellular-facing; it reads GASQNVCTIRP. Residues 248–268 form a helical membrane-spanning segment; it reads LVAALCFHQMFEGMGLGGCIL. Residues 269–278 are Cytoplasmic-facing; the sequence is QAGYGGRTRS. A helical transmembrane segment spans residues 279 to 299; the sequence is ALVFFFSTTTPFGIALGLALT. The Extracellular segment spans residues 300–309; sequence RVYSDSSPTA. A helical transmembrane segment spans residues 310–330; sequence LVVVGLLNAASAGLLHYMALV. At 331–349 the chain is on the cytoplasmic side; the sequence is ELLAADFMGPKLQGNVRLQ. The helical transmembrane segment at 350–370 threads the bilayer; sequence LAASLAILLGAGGMSVMAKWA.

It belongs to the ZIP transporter (TC 2.A.5) family.

The protein localises to the cell membrane. Its function is as follows. Iron transporter that may play a role in the uptake of iron from the rhizosphere across the plasma membrane in the root epidermal layer. This Oryza sativa subsp. japonica (Rice) protein is Fe(2+) transport protein 2 (IRT2).